A 470-amino-acid polypeptide reads, in one-letter code: Ras-like GTPase HI_1637 (470 aa).

The short motif at 27–34 is the Walker A motif element; sequence GLSRSGKT. Positions 29, 32, 33, 34, 35, 98, 101, 102, 103, 342, 344, and 345 each coordinate GTP. 7 residues coordinate GDP: G32, K33, T34, A35, W98, S101, and T102. GDP contacts are provided by K342, D344, H345, A383, and V384. V384 contributes to the GTP binding site.

It to E.coli YcjX. In terms of assembly, monomer in solution. The cofactor is Mg(2+).

The enzyme catalyses GTP + H2O = GDP + phosphate + H(+). Its activity is regulated as follows. Alternates between an inactive form bound to GDP and an active form bound to GTP. Likely activated by a guanine nucleotide-exchange factor (GEF). In terms of biological role, binds GTP and GDP. Has intrinsic GTPase activity. Does not hydrolyze ATP. May act as a transducer of stress responses. The polypeptide is Ras-like GTPase HI_1637 (Haemophilus influenzae (strain ATCC 51907 / DSM 11121 / KW20 / Rd)).